The primary structure comprises 207 residues: dTTP/UTP pyrophosphatase (207 aa).

Residue D79 is the Proton acceptor of the active site.

This sequence belongs to the Maf family. YhdE subfamily. Requires a divalent metal cation as cofactor.

The protein resides in the cytoplasm. The enzyme catalyses dTTP + H2O = dTMP + diphosphate + H(+). The catalysed reaction is UTP + H2O = UMP + diphosphate + H(+). Its function is as follows. Nucleoside triphosphate pyrophosphatase that hydrolyzes dTTP and UTP. May have a dual role in cell division arrest and in preventing the incorporation of modified nucleotides into cellular nucleic acids. The polypeptide is dTTP/UTP pyrophosphatase (Nitrobacter winogradskyi (strain ATCC 25391 / DSM 10237 / CIP 104748 / NCIMB 11846 / Nb-255)).